The sequence spans 314 residues: uncharacterized protein (314 aa).

Transmembrane regions (helical) follow at residues 4–23, 36–53, 68–90, 97–116, 131–153, 174–196, 200–222, 229–251, 261–283, and 290–309; these read FFIG…YFSG, FNKL…FVSI, TLVS…YKFF, AAVC…GFAV, VAII…LNPS, PVVW…PAAW, FNLI…LAAH, EIAY…VGMA, MMVL…RFNV, and ASLA…WIYV.

The protein belongs to the auxin efflux carrier (TC 2.A.69) family.

The protein localises to the cell membrane. This is an uncharacterized protein from Escherichia coli O157:H7.